An 842-amino-acid polypeptide reads, in one-letter code: MDIRKAYLDFFASKGHEITPSSPLVPDDATLLFTNAGMVPFKSIFTGEIPRPNPPRKTSCQTCIRAGGKHNDLDNVGYTARHHTFFEMLGNFSFGDYFKEQAIAYAWEFVTEVLKLPKDRLYVTVHENDDEAFNLWQKHIQKERIYKFGDKDNFWQMGDTGPCGPCSEIFYDQGQEHFNSSEDYMGGDGDRFLEIWNLVFMQYERSADGVLSPLPKPSIDTGMGLERVTAIKEGKFSNFDSSLFMPIINEISKLCNKTYVYESGASFRVIADHIRSSVFLLAQGVSFDKEGRGYVLRRILRRALRHGYLLGFKQAFMYKLVDIVCDLMGGHYTYLNEKKDFIKEQIRLEEERFLSTIENGIEIFNEELKNTKEIFSGEVAFKLYDTYGFPLDLTADMLREKNLKVDEEKFELFMNEQKARAKASWKGSGDKTASGDFKNLLEKFGENHFVGYEKAECESKILALLDEDFKEVSTLKDAGWVMLENTPFYATSGGQSADSGFIAKREVLDTQKFFNLNLSFIKAGEELKVNDIVHARIDTEKREQIARHHSATHLLHHALREILGSHVSQAGSLVESNKLRFDFTHHKALNKEELESIEKRVNKMIINSSEAILENMPLEEAKKSGAIALFNEKYQGNVRVLTLGESKELCGGTHVKNTAQIGSFYIVKESGVSAGVRRIEAVVSKAALEFVKNQLEELSKVKDELKNNDILSGIKKLKNEILSLKNELKNSSKTELDSKNIQGVEICVKRIDNGDIKAMIDDFKNKFAKAVILLIQVKDEKITLAAGVKDVPLKAGALVKEAAQILGGNGGGRDDFATAGGKDLSKINEALKQSLETIEKAL.

His549, His553, Cys650, and His654 together coordinate Zn(2+).

The protein belongs to the class-II aminoacyl-tRNA synthetase family. Requires Zn(2+) as cofactor.

It is found in the cytoplasm. The enzyme catalyses tRNA(Ala) + L-alanine + ATP = L-alanyl-tRNA(Ala) + AMP + diphosphate. Catalyzes the attachment of alanine to tRNA(Ala) in a two-step reaction: alanine is first activated by ATP to form Ala-AMP and then transferred to the acceptor end of tRNA(Ala). Also edits incorrectly charged Ser-tRNA(Ala) and Gly-tRNA(Ala) via its editing domain. In Campylobacter jejuni (strain RM1221), this protein is Alanine--tRNA ligase.